Consider the following 698-residue polypeptide: MTTIRGGSRRASLPALALLGVLLGACHSDDNAQVNTLPGFVSGNVRKTAYDGASDDLLTAGLGKTGLGSDTRPGFANPAQPTAAELRRLAIYSNYRALVDITPNGGYGRFWGPNVDLAGNDTLGEGKIAGTEYLAYSDDGSGRKNVTLLVQVPASFDPANPCIVTATSSGSRGVYGAIAAAGEWGLKRGCAVAYNDKGGGNGAHEIGTGVVTLIDGTLASASSAGSASLFTASESSSALAAFNSAFPNRYAYKHAHSQQNPEQDWGRVTLQAVEFAYWALNEQFGPAIDGARHGVRYRPGDITTIAASVSNGGAAALAAAEQDTRGWITAVVVGEPQINVRMTPGVTVEQGGVPAPSFGRPLADYATLANLLQPCAAAAVAAVGAPYLSALPVGLTQSIRVQRCATLAAAGLVSGADTASQANDALAQLHAAGYLADSDLLQAPMWDSQAIPAIAVTYANAYTRSRVTDNLCNFSFATTNSVTGAVAPPATSPMTSLFGAGNGVPPTNGINLVFNGASGGVDHRLATPDASFAGAFCLRQLWTANQLGIGANVDAVRVAANLQRKPAIIVQGRSDALVPVNHASRAYVAQNSATEGRASQLSFYEVTNGQHFDAFLSVPGFDTRFVPVHYYDEQALNLMWNHLKSGAPLPPSQVIRTVPRGGVPGAAPALSTANLPPIVQSPGSNAITVNAGVIDVPL.

An N-terminal signal peptide occupies residues 1–32; the sequence is MTTIRGGSRRASLPALALLGVLLGACHSDDNA. The active-site Charge relay system is the Ser-310.

It belongs to the D-(-)-3-hydroxybutyrate oligomer hydrolase family.

Its subcellular location is the secreted. The catalysed reaction is (3R)-hydroxybutanoate dimer + H2O = 2 (R)-3-hydroxybutanoate + H(+). It participates in lipid metabolism; butanoate metabolism. Participates in the degradation of poly-3-hydroxybutyrate (PHB). It works downstream of poly(3-hydroxybutyrate) depolymerase, hydrolyzing D(-)-3-hydroxybutyrate oligomers of various length (3HB-oligomers) into 3HB-monomers. In Burkholderia thailandensis (strain ATCC 700388 / DSM 13276 / CCUG 48851 / CIP 106301 / E264), this protein is D-(-)-3-hydroxybutyrate oligomer hydrolase.